Consider the following 311-residue polypeptide: Aspartate carbamoyltransferase catalytic subunit (311 aa).

2 residues coordinate carbamoyl phosphate: arginine 55 and threonine 56. Residue lysine 85 coordinates L-aspartate. Carbamoyl phosphate-binding residues include arginine 106, histidine 135, and glutamine 138. The L-aspartate site is built by arginine 168 and arginine 230. Residues leucine 268 and proline 269 each contribute to the carbamoyl phosphate site.

It belongs to the aspartate/ornithine carbamoyltransferase superfamily. ATCase family. Heterododecamer (2C3:3R2) of six catalytic PyrB chains organized as two trimers (C3), and six regulatory PyrI chains organized as three dimers (R2).

It catalyses the reaction carbamoyl phosphate + L-aspartate = N-carbamoyl-L-aspartate + phosphate + H(+). It functions in the pathway pyrimidine metabolism; UMP biosynthesis via de novo pathway; (S)-dihydroorotate from bicarbonate: step 2/3. Its function is as follows. Catalyzes the condensation of carbamoyl phosphate and aspartate to form carbamoyl aspartate and inorganic phosphate, the committed step in the de novo pyrimidine nucleotide biosynthesis pathway. In Yersinia pseudotuberculosis serotype O:1b (strain IP 31758), this protein is Aspartate carbamoyltransferase catalytic subunit.